A 605-amino-acid polypeptide reads, in one-letter code: UvrABC system protein C (605 aa).

A GIY-YIG domain is found at 13–92; it reads SEPGVYLMKD…IKRYRPKYNV (80 aa). One can recognise a UVR domain in the interval 205 to 240; the sequence is EKLMELLKEKMNESSMNFRFEEAAVYRDKIKSLEEM.

Belongs to the UvrC family. Interacts with UvrB in an incision complex.

The protein resides in the cytoplasm. Its function is as follows. The UvrABC repair system catalyzes the recognition and processing of DNA lesions. UvrC both incises the 5' and 3' sides of the lesion. The N-terminal half is responsible for the 3' incision and the C-terminal half is responsible for the 5' incision. In Clostridioides difficile (strain 630) (Peptoclostridium difficile), this protein is UvrABC system protein C.